Here is a 61-residue protein sequence, read N- to C-terminus: Small ribosomal subunit protein uS14 (61 aa).

Zn(2+) is bound by residues Cys24, Cys27, Cys40, and Cys43.

It belongs to the universal ribosomal protein uS14 family. Zinc-binding uS14 subfamily. As to quaternary structure, part of the 30S ribosomal subunit. Contacts proteins S3 and S10. Zn(2+) serves as cofactor.

In terms of biological role, binds 16S rRNA, required for the assembly of 30S particles and may also be responsible for determining the conformation of the 16S rRNA at the A site. This Dictyoglomus turgidum (strain DSM 6724 / Z-1310) protein is Small ribosomal subunit protein uS14.